The following is a 629-amino-acid chain: MFASRFDPSQLTAPAASAPEGIVGTTPPAIVPLKRQATESDNEEYGSHQDSDESSNSSSEEDEDRMQVDYGASEEDSSEVEEEESKPSTHSTVLSRFKQTVSLQERLGASDIAESKEDEGIEDEAASTHQLKQIPQPEFVKNPMNLNTNSLQFKSTGWLNTEKIYYDNSLIKPFSDYANELEAKLLQNICKNFSTNTFPIQSIILDSILPVLNFTLNVSKRNFTRRIGDILVNAATGSGKTLAYSIPIVQTLFKRQINRLRCIIIVPTKLLINQVYTTLTKLTQGTSLIVSIAKLENSLKDEHKKLSNLEPDILITTPGRLVDHLNMKSINLKNLKFLIIDEADRLLNQSFQGWCPKLMSHLKTDKLDTLPGNVIKMIFSATLTTNTEKLNGLNLYKPKLFLKQTDKLYQLPNKLNEFNINIPTAKSVYKPLILLYSICQFMAHSPIAAKILIFVKSNESSIRLSKLLQLICESRSQSSVLKNLQNLAVSINSVNSNNSKAENKKIVANFSHHSESAGITILITTDIMSRGIDINDITQVINYDPPMSSQQYVHRVGRTARANELGSAYNLLVGRGERTFFDDLNKDLDRDGKSVQPLELDFTLLESDSELYTSSLESLKNYHNNTAQA.

The interval 1–129 is disordered; sequence MFASRFDPSQ…GIEDEAASTH (129 aa). Over residues 72–84 the composition is skewed to acidic residues; it reads ASEEDSSEVEEEE. A phosphoserine mark is found at S73, S77, and S78. The segment covering 88-103 has biased composition (polar residues); it reads STHSTVLSRFKQTVSL. The span at 116-125 shows a compositional bias: acidic residues; sequence KEDEGIEDEA. A Q motif motif is present at residues 197-205; the sequence is TFPIQSIIL. Residues 221 to 401 enclose the Helicase ATP-binding domain; that stretch reads RNFTRRIGDI…GLNLYKPKLF (181 aa). 234–241 contributes to the ATP binding site; the sequence is AATGSGKT. A DEAD box motif is present at residues 341–344; the sequence is DEAD. A Helicase C-terminal domain is found at 437–603; that stretch reads SICQFMAHSP…SVQPLELDFT (167 aa).

It belongs to the DEAD box helicase family. DDX51/DBP6 subfamily. In terms of assembly, associated with pre-ribosomal particles. Interacts with DBP9 and RSA3. Together with NOP8, URB1, URB2 and RSA3, forms an RNA-independent complex, which is required during early maturation of nascent 60S ribosomal subunits.

The protein localises to the nucleus. It localises to the nucleolus. The enzyme catalyses ATP + H2O = ADP + phosphate + H(+). ATP-binding RNA helicase involved in the biogenesis of 60S ribosomal subunits and is required for the normal formation of 25S and 5.8S rRNAs. The chain is ATP-dependent RNA helicase DBP6 (DBP6) from Saccharomyces cerevisiae (strain ATCC 204508 / S288c) (Baker's yeast).